A 180-amino-acid chain; its full sequence is Regulator of G-protein signaling 8 (180 aa).

Serine 26 is subject to Phosphoserine. The RGS domain maps to 56–171 (SFDVLLSHKY…FLRSKMYLDL (116 aa)).

In terms of assembly, interacts with GNAO1 and GNAI3.

The protein localises to the cell membrane. The protein resides in the membrane. It localises to the perikaryon. Its subcellular location is the cell projection. It is found in the dendrite. The protein localises to the nucleus. Regulates G protein-coupled receptor signaling cascades, including signaling via muscarinic acetylcholine receptor CHRM2 and dopamine receptor DRD2. Inhibits signal transduction by increasing the GTPase activity of G protein alpha subunits, thereby driving them into their inactive GDP-bound form. Modulates the activity of potassium channels that are activated in response to DRD2 and CHRM2 signaling. This is Regulator of G-protein signaling 8 (Rgs8) from Mus musculus (Mouse).